A 772-amino-acid polypeptide reads, in one-letter code: Lon protease (772 aa).

The 195-residue stretch at 6–200 (YPTLPLKNTV…LMHRYLNHEV (195 aa)) folds into the Lon N-terminal domain. 352-359 (GPPGVGKT) provides a ligand contact to ATP. Residues 588–769 (QLAPGVAAGL…EEVLAEAIPD (182 aa)) enclose the Lon proteolytic domain. Catalysis depends on residues serine 675 and lysine 718.

The protein belongs to the peptidase S16 family. Homohexamer. Organized in a ring with a central cavity.

It is found in the cytoplasm. The catalysed reaction is Hydrolysis of proteins in presence of ATP.. In terms of biological role, ATP-dependent serine protease that mediates the selective degradation of mutant and abnormal proteins as well as certain short-lived regulatory proteins. Required for cellular homeostasis and for survival from DNA damage and developmental changes induced by stress. Degrades polypeptides processively to yield small peptide fragments that are 5 to 10 amino acids long. Binds to DNA in a double-stranded, site-specific manner. In Nitrosococcus oceani (strain ATCC 19707 / BCRC 17464 / JCM 30415 / NCIMB 11848 / C-107), this protein is Lon protease.